The following is a 294-amino-acid chain: Foldase protein PrsA 1 (294 aa).

Positions 1–21 (MTKLKKVMISVIAATLLLLAG) are cleaved as a signal peptide. The N-palmitoyl cysteine moiety is linked to residue cysteine 22. A lipid anchor (S-diacylglycerol cysteine) is attached at cysteine 22. Positions 135 to 226 (EPDITVRHIL…YGYHLIQLVK (92 aa)) constitute a PpiC domain.

Belongs to the PrsA family.

It localises to the cell membrane. The enzyme catalyses [protein]-peptidylproline (omega=180) = [protein]-peptidylproline (omega=0). In terms of biological role, plays a major role in protein secretion by helping the post-translocational extracellular folding of several secreted proteins. The polypeptide is Foldase protein PrsA 1 (Listeria monocytogenes serotype 4b (strain F2365)).